The following is a 502-amino-acid chain: Alpha-globin transcription factor CP2 (502 aa).

The Grh/CP2 DB domain maps to 61–300 (ENKILPFQYV…SPGFNSSHSS (240 aa)). The tract at residues 133–395 (EHQQLEGWRW…VRPRLTIYVC (263 aa)) is DNA-binding. 2 disordered regions span residues 238–268 (FKPK…YQPS) and 294–325 (FNSS…DNLL). The segment covering 241–265 (KGADRKQKTDREKMEKRTPHEKEKY) has biased composition (basic and acidic residues). Position 353 is a phosphoserine (Ser353).

It belongs to the grh/CP2 family. CP2 subfamily. In terms of assembly, binds to DNA as a dimer, isoform 3 does not bind to DNA or affect the binding of isoform 1 to DNA. Interacts with UBP1 and PIAS1, and is probably part of a complex containing TFCP2, UBP1 and PIAS1. Component of the SSP (stage selector protein) complex, which appears to be a heteromer of TFCP2 and 2 copies of NFE4. In terms of tissue distribution, ubiquitous. Expressed in brain, ovary, kidney, thymus, spleen, liver, adrenal, heart and lung (at protein level).

The protein resides in the nucleus. Functionally, binds a variety of cellular and viral promoters including fibrinogen, alpha-globin, SV40 and HIV-1 promoters. Activation of the alpha-globin promoter in erythroid cells is via synergistic interaction with UBP1. Functions as part of the SSP (stage selector protein) complex. Facilitates the interaction of the gamma-globin genes with enhancer elements contained in the locus control region in fetal erythroid cells. Interacts by binding to the stage selector element (SSE) in the proximal gamma-globin promoter. This chain is Alpha-globin transcription factor CP2 (TFCP2), found in Homo sapiens (Human).